Reading from the N-terminus, the 21-residue chain is Bombinin-H1/H3 (21 aa).

Isoleucine 2 is subject to D-allo-isoleucine; in form H3. An Isoleucine amide modification is found at isoleucine 20.

This sequence belongs to the bombinin family. In terms of tissue distribution, expressed by the skin glands.

The protein localises to the secreted. Functionally, has antimicrobial and hemolytic activities. This Bombina variegata (Yellow-bellied toad) protein is Bombinin-H1/H3.